Here is a 241-residue protein sequence, read N- to C-terminus: Golgi-associated RAB2 interactor protein 6 (241 aa).

The protein belongs to the GARIN family.

This is Golgi-associated RAB2 interactor protein 6 from Homo sapiens (Human).